A 105-amino-acid chain; its full sequence is Putative pterin-4-alpha-carbinolamine dehydratase (105 aa).

The protein belongs to the pterin-4-alpha-carbinolamine dehydratase family.

It carries out the reaction (4aS,6R)-4a-hydroxy-L-erythro-5,6,7,8-tetrahydrobiopterin = (6R)-L-erythro-6,7-dihydrobiopterin + H2O. This is Putative pterin-4-alpha-carbinolamine dehydratase from Sinorhizobium fredii (strain NBRC 101917 / NGR234).